Here is a 468-residue protein sequence, read N- to C-terminus: GDNF family receptor alpha-1 (468 aa).

The signal sequence occupies residues 1 to 24 (MFLATLYFALPLLDLLMSAEVSGG). 3 tandem repeats follow at residues 25 to 113 (DRLD…LQGN), 150 to 238 (KGNN…YEER), and 239 to 342 (ERPN…KNAI). A disulfide bridge links cysteine 36 with cysteine 42. A glycan (N-linked (GlcNAc...) asparagine) is linked at asparagine 59. 10 disulfides stabilise this stretch: cysteine 154–cysteine 214, cysteine 161–cysteine 167, cysteine 178–cysteine 192, cysteine 187–cysteine 233, cysteine 216–cysteine 221, cysteine 243–cysteine 313, cysteine 250–cysteine 256, cysteine 267–cysteine 285, cysteine 277–cysteine 337, and cysteine 315–cysteine 325. 2 N-linked (GlcNAc...) asparagine glycosylation sites follow: asparagine 347 and asparagine 406. Residue serine 430 is the site of GPI-anchor amidated serine attachment. Positions 431 to 468 (HITTKSMAAPPSCSLSSLPVLMLTALAALLSVSLAETS) are cleaved as a propeptide — removed in mature form.

It belongs to the GDNFR family. In terms of assembly, interacts with GDNF ligand and RET: forms a 2:2:2 ternary complex composed of GDNF ligand, GFRA1 and RET receptor. Interacts with SORL1, either alone or in complex with GDNF. Interaction between SORL1 and GFRA1 leads to GFRA1 internalization, but not degradation. In terms of tissue distribution, expressed in liver, brain, kidney and cochlea.

The protein resides in the cell membrane. The protein localises to the golgi apparatus. It is found in the trans-Golgi network. Its subcellular location is the endosome. It localises to the multivesicular body. Coreceptor for GDNF, a neurotrophic factor that enhances survival and morphological differentiation of dopaminergic neurons and increases their high-affinity dopamine uptake. GDNF-binding leads to autophosphorylation and activation of the RET receptor. The sequence is that of GDNF family receptor alpha-1 (Gfra1) from Rattus norvegicus (Rat).